We begin with the raw amino-acid sequence, 298 residues long: GTPase Era (298 aa).

An Era-type G domain is found at 8–176; it reads HCGSVAVIGR…VRDVLALLPE (169 aa). The G1 stretch occupies residues 16–23; that stretch reads GRPNVGKS. 16–23 contributes to the GTP binding site; it reads GRPNVGKS. The segment at 42–46 is G2; the sequence is QTTRH. The segment at 63-66 is G3; that stretch reads DTPG. GTP contacts are provided by residues 63 to 67 and 125 to 128; these read DTPGL and NKID. Residues 125–128 are G4; the sequence is NKID. The tract at residues 155 to 157 is G5; sequence ISA. The 85-residue stretch at 199-283 folds into the KH type-2 domain; that stretch reads VREQLMRQLG…FLETWVRVRE (85 aa).

It belongs to the TRAFAC class TrmE-Era-EngA-EngB-Septin-like GTPase superfamily. Era GTPase family. As to quaternary structure, monomer.

It localises to the cytoplasm. Its subcellular location is the cell inner membrane. In terms of biological role, an essential GTPase that binds both GDP and GTP, with rapid nucleotide exchange. Plays a role in 16S rRNA processing and 30S ribosomal subunit biogenesis and possibly also in cell cycle regulation and energy metabolism. This Stenotrophomonas maltophilia (strain R551-3) protein is GTPase Era.